We begin with the raw amino-acid sequence, 562 residues long: Potassium-transporting ATPase potassium-binding subunit (562 aa).

12 consecutive transmembrane segments (helical) span residues 5 to 25, 65 to 85, 135 to 155, 181 to 201, 257 to 277, 283 to 303, 331 to 351, 358 to 378, 381 to 401, 422 to 442, 486 to 506, and 528 to 548; these read GILA…PLGG, AYLR…YAVF, IGIT…AMAF, LLLP…VPET, ILEI…AGHF, LAIV…YIVY, FGLP…TGAV, LMPL…IFGG, VGLL…GLMV, AAML…MALP, ISIG…MLAI, and FAFG…TFFP.

It belongs to the KdpA family. In terms of assembly, the system is composed of three essential subunits: KdpA, KdpB and KdpC.

The protein resides in the cell membrane. Part of the high-affinity ATP-driven potassium transport (or Kdp) system, which catalyzes the hydrolysis of ATP coupled with the electrogenic transport of potassium into the cytoplasm. This subunit binds the extracellular potassium ions and delivers the ions to the membrane domain of KdpB through an intramembrane tunnel. The polypeptide is Potassium-transporting ATPase potassium-binding subunit (Alicyclobacillus acidocaldarius subsp. acidocaldarius (strain ATCC 27009 / DSM 446 / BCRC 14685 / JCM 5260 / KCTC 1825 / NBRC 15652 / NCIMB 11725 / NRRL B-14509 / 104-IA) (Bacillus acidocaldarius)).